We begin with the raw amino-acid sequence, 334 residues long: Proline-serine-threonine phosphatase-interacting protein 2 (334 aa).

An F-BAR domain is found at S4–D264. Positions G66–N163 form a coiled coil. Positions Y288–D322 are disordered. Phosphotyrosine occurs at positions 323 and 329.

Post-translationally, phosphorylated on tyrosine. As to expression, expressed in macrophage-containing tissues, including bone marrow, spleen, liver, kidney, intestine and brain.

It is found in the cytoplasm. It localises to the membrane. Its function is as follows. Binds to F-actin. May be involved in regulation of the actin cytoskeleton. The protein is Proline-serine-threonine phosphatase-interacting protein 2 (Pstpip2) of Mus musculus (Mouse).